The chain runs to 356 residues: NADH-quinone oxidoreductase subunit H (356 aa).

9 consecutive transmembrane segments (helical) span residues 22-42, 59-79, 93-113, 124-144, 171-191, 198-218, 240-260, 285-305, and 321-341; these read GVVS…TAYL, PSLA…KLVF, FIIA…VIPI, IGGI…IIIA, MALS…IQIV, PIWL…SILA, VEYS…NMIL, IPGY…FLWI, and GLKV…TILV.

The protein belongs to the complex I subunit 1 family. NDH-1 is composed of 14 different subunits. Subunits NuoA, H, J, K, L, M, N constitute the membrane sector of the complex.

Its subcellular location is the cell inner membrane. The catalysed reaction is a quinone + NADH + 5 H(+)(in) = a quinol + NAD(+) + 4 H(+)(out). In terms of biological role, NDH-1 shuttles electrons from NADH, via FMN and iron-sulfur (Fe-S) centers, to quinones in the respiratory chain. The immediate electron acceptor for the enzyme in this species is believed to be ubiquinone. Couples the redox reaction to proton translocation (for every two electrons transferred, four hydrogen ions are translocated across the cytoplasmic membrane), and thus conserves the redox energy in a proton gradient. This subunit may bind ubiquinone. This chain is NADH-quinone oxidoreductase subunit H, found in Orientia tsutsugamushi (strain Boryong) (Rickettsia tsutsugamushi).